The chain runs to 331 residues: Gamma-parvin (331 aa).

Residue Met-1 is modified to N-acetylmethionine. Residues 18–38 are disordered; it reads QPTEEELPRGGKKKYLSPNSK. 2 consecutive Calponin-homology (CH) domains span residues 44 to 151 and 210 to 317; these read EELQ…KRFQ and HAVQ…QKHS.

It belongs to the parvin family. In terms of assembly, interacts with ILK; the interaction promotes the establishment of cell polarity required for leukocyte migration. Interacts with ARHGEF6; the guanine nucleotide exchange factor activity of ARHGEF6 is essential for the PARVG-induced enhancement of cell spreading. Expressed strongly in spleen and testis, moderately in lung and weakly in brain and heart.

The protein resides in the cell junction. The protein localises to the focal adhesion. Its subcellular location is the cell membrane. It localises to the cytoplasm. It is found in the cytoskeleton. Its function is as follows. Plays a role with ILK in promoting the cell adhesion and spreading of leukocytes. The chain is Gamma-parvin (Parvg) from Mus musculus (Mouse).